The sequence spans 174 residues: Crossover junction endodeoxyribonuclease RuvC (174 aa).

Active-site residues include Asp8, Glu68, and Asp140. The Mg(2+) site is built by Asp8, Glu68, and Asp140.

The protein belongs to the RuvC family. As to quaternary structure, homodimer which binds Holliday junction (HJ) DNA. The HJ becomes 2-fold symmetrical on binding to RuvC with unstacked arms; it has a different conformation from HJ DNA in complex with RuvA. In the full resolvosome a probable DNA-RuvA(4)-RuvB(12)-RuvC(2) complex forms which resolves the HJ. Mg(2+) serves as cofactor.

It localises to the cytoplasm. The catalysed reaction is Endonucleolytic cleavage at a junction such as a reciprocal single-stranded crossover between two homologous DNA duplexes (Holliday junction).. The RuvA-RuvB-RuvC complex processes Holliday junction (HJ) DNA during genetic recombination and DNA repair. Endonuclease that resolves HJ intermediates. Cleaves cruciform DNA by making single-stranded nicks across the HJ at symmetrical positions within the homologous arms, yielding a 5'-phosphate and a 3'-hydroxyl group; requires a central core of homology in the junction. The consensus cleavage sequence is 5'-(A/T)TT(C/G)-3'. Cleavage occurs on the 3'-side of the TT dinucleotide at the point of strand exchange. HJ branch migration catalyzed by RuvA-RuvB allows RuvC to scan DNA until it finds its consensus sequence, where it cleaves and resolves the cruciform DNA. This Legionella pneumophila subsp. pneumophila (strain Philadelphia 1 / ATCC 33152 / DSM 7513) protein is Crossover junction endodeoxyribonuclease RuvC.